Here is a 174-residue protein sequence, read N- to C-terminus: MTNRWFNVGKIVNTHGIKGEVRVISKTDFAEERYKPGNTLYLFAEGAAEPIKVTVSAHRLHKQFHLLQFKEMPSLNEVEHLRNMVIKVPEEDLGELEEDEFYFHEIIGCEVVSEDGELIGTVKEILTPGANDVWVVARKGKKDALIPYIASVVKDININEKKIKIHVMEGLIDE.

The PRC barrel domain occupies 98–171 (EDEFYFHEII…KIKIHVMEGL (74 aa)).

This sequence belongs to the RimM family. As to quaternary structure, binds ribosomal protein uS19.

It is found in the cytoplasm. Functionally, an accessory protein needed during the final step in the assembly of 30S ribosomal subunit, possibly for assembly of the head region. Essential for efficient processing of 16S rRNA. May be needed both before and after RbfA during the maturation of 16S rRNA. It has affinity for free ribosomal 30S subunits but not for 70S ribosomes. In Bacillus velezensis (strain DSM 23117 / BGSC 10A6 / LMG 26770 / FZB42) (Bacillus amyloliquefaciens subsp. plantarum), this protein is Ribosome maturation factor RimM.